The chain runs to 235 residues: Ribonuclease HII (235 aa).

In terms of domain architecture, RNase H type-2 spans 23-212 (GLVAGVDEAG…VAHVVSIARM (190 aa)). The a divalent metal cation site is built by aspartate 29, glutamate 30, and aspartate 121.

The protein belongs to the RNase HII family. The cofactor is Mn(2+). Requires Mg(2+) as cofactor.

It localises to the cytoplasm. It catalyses the reaction Endonucleolytic cleavage to 5'-phosphomonoester.. Functionally, endonuclease that specifically degrades the RNA of RNA-DNA hybrids. This Delftia acidovorans (strain DSM 14801 / SPH-1) protein is Ribonuclease HII.